Consider the following 455-residue polypeptide: NADH-quinone oxidoreductase subunit N (455 aa).

Helical transmembrane passes span Ala25 to Tyr45, Phe61 to His81, Val99 to Leu119, Phe149 to Ala169, Ile193 to Phe213, Ile257 to Leu277, Met285 to Ser305, Leu312 to Val332, Ala355 to Phe375, Ile391 to Ile411, and Ile432 to Leu452.

This sequence belongs to the complex I subunit 2 family. As to quaternary structure, NDH-1 is composed of 14 different subunits. Subunits NuoA, H, J, K, L, M, N constitute the membrane sector of the complex.

The protein resides in the cell inner membrane. The enzyme catalyses a quinone + NADH + 5 H(+)(in) = a quinol + NAD(+) + 4 H(+)(out). Functionally, NDH-1 shuttles electrons from NADH, via FMN and iron-sulfur (Fe-S) centers, to quinones in the respiratory chain. The immediate electron acceptor for the enzyme in this species is believed to be a menaquinone. Couples the redox reaction to proton translocation (for every two electrons transferred, four hydrogen ions are translocated across the cytoplasmic membrane), and thus conserves the redox energy in a proton gradient. This is NADH-quinone oxidoreductase subunit N from Flavobacterium psychrophilum (strain ATCC 49511 / DSM 21280 / CIP 103535 / JIP02/86).